The following is a 348-amino-acid chain: NADH-ubiquinone oxidoreductase chain 2 (348 aa).

11 helical membrane-spanning segments follow: residues 3-23 (PVVL…TFIG), 25-45 (HWLL…PLMI), 67-87 (SALL…WSLL), 95-115 (ATLV…HFWL), 118-138 (VLQG…KLAP), 149-171 (LNSN…GGLN), 178-198 (ILAY…HYSP), 203-223 (LNLA…KLFN), 240-260 (LSII…LSGF), 274-294 (DLAI…FFYL), and 324-344 (LILM…PTIF).

This sequence belongs to the complex I subunit 2 family.

Its subcellular location is the mitochondrion inner membrane. The catalysed reaction is a ubiquinone + NADH + 5 H(+)(in) = a ubiquinol + NAD(+) + 4 H(+)(out). In terms of biological role, core subunit of the mitochondrial membrane respiratory chain NADH dehydrogenase (Complex I) that is believed to belong to the minimal assembly required for catalysis. Complex I functions in the transfer of electrons from NADH to the respiratory chain. The immediate electron acceptor for the enzyme is believed to be ubiquinone. The polypeptide is NADH-ubiquinone oxidoreductase chain 2 (MT-ND2) (Squalus acanthias (Spiny dogfish)).